The primary structure comprises 280 residues: Energy-coupling factor transporter ATP-binding protein EcfA2 (280 aa).

The ABC transporter domain maps to 3–245; that stretch reads INLQNVSYTY…VSLLEKKQLG (243 aa). Residue 40-47 participates in ATP binding; that stretch reads GHTGSGKS.

This sequence belongs to the ABC transporter superfamily. Energy-coupling factor EcfA family. In terms of assembly, forms a stable energy-coupling factor (ECF) transporter complex composed of 2 membrane-embedded substrate-binding proteins (S component), 2 ATP-binding proteins (A component) and 2 transmembrane proteins (T component).

The protein localises to the cell membrane. ATP-binding (A) component of a common energy-coupling factor (ECF) ABC-transporter complex. Unlike classic ABC transporters this ECF transporter provides the energy necessary to transport a number of different substrates. In Streptococcus pyogenes serotype M1, this protein is Energy-coupling factor transporter ATP-binding protein EcfA2.